The primary structure comprises 398 residues: Phosphoglycerate kinase (398 aa).

Substrate-binding positions include 23–25 (DFN), Arg-38, 61–64 (HMGK), Arg-122, and Arg-155. Residues Lys-206, Gly-297, Glu-328, and 354 to 357 (GGDS) each bind ATP.

It belongs to the phosphoglycerate kinase family. In terms of assembly, monomer.

It is found in the cytoplasm. It catalyses the reaction (2R)-3-phosphoglycerate + ATP = (2R)-3-phospho-glyceroyl phosphate + ADP. The protein operates within carbohydrate degradation; glycolysis; pyruvate from D-glyceraldehyde 3-phosphate: step 2/5. The polypeptide is Phosphoglycerate kinase (Clostridium botulinum (strain Kyoto / Type A2)).